Consider the following 787-residue polypeptide: MNQKTLKALEYDKIVEILKNMAKSTPAKEYFENLIPSTNLADIENELNKVDEGYRYVLKYGNPPTLEFENILPSLKKSKLGATLNPHEILQIGKVLKLSYEMRSYLSYTQDFSFLESMKKRLVNLKEVISRIDQTFLTADEILDTASPRLKEIRDRIRKLESRIRDELNSMIRDPKIQRFLQEPIITIRGEKLLLPVKAEFRNEVKGIVHDQSATGATLFVEPFVCVEISNQIRILKSQEKEEIERILQEISSLIASYCDEIETSFYALVELDIVFTKAIWAKEMNASKPVINTSGIINLKKARHPLIQKDKVVPIDIHLGKDFDVLIITGPNTGGKTVTLKTVGLFCLLCQSGIFIPADEDSQLCIFQKIFADIGDDQSIVQSLSTFSAHMKNIIEITKNADDKTLVLLDEIGAGTDPEEGAALAKAILKYLSEKGSKVIATTHYGELKIFAQQEDRFENASCEFDVKTLKPTYRLLIGIPGRSNALVISSNLGLDKGIVEMARGYLSQKTIDLDRIINEMEQKRKEAEENLELARKLKLEAQALKAAYEEEKKRFETERERIRKKAINEAKEIVERAQYEIENLFKDLRKLAENLKEKEVLKELEEKKREYERLIQSISQQEKQEAESKTKKTLQNIRLGQKVYVRSFDAVGFVESLPDSKGNLTVQIGIMKLNVNISDIEEVEEGEKKVYQTTSKNVKLREKSVDLSIDVRGKTSDDAILDVDKYLDDAYTSGLRQVTIIHGKGTGVLRQAIRNFLKRHPLVKSFRDGTYGEGEQGVTIVELRD.

331–338 is a binding site for ATP; that stretch reads GPNTGGKT. Positions 711–786 constitute a Smr domain; that stretch reads IDVRGKTSDD…EQGVTIVELR (76 aa).

It belongs to the DNA mismatch repair MutS family. MutS2 subfamily. Homodimer. Binds to stalled ribosomes, contacting rRNA.

Its function is as follows. Endonuclease that is involved in the suppression of homologous recombination and thus may have a key role in the control of bacterial genetic diversity. Acts as a ribosome collision sensor, splitting the ribosome into its 2 subunits. Detects stalled/collided 70S ribosomes which it binds and splits by an ATP-hydrolysis driven conformational change. Acts upstream of the ribosome quality control system (RQC), a ribosome-associated complex that mediates the extraction of incompletely synthesized nascent chains from stalled ribosomes and their subsequent degradation. Probably generates substrates for RQC. The polypeptide is Endonuclease MutS2 (Caldicellulosiruptor saccharolyticus (strain ATCC 43494 / DSM 8903 / Tp8T 6331)).